Consider the following 423-residue polypeptide: UDP-N-acetylglucosamine 1-carboxyvinyltransferase 2 (423 aa).

23–24 lines the phosphoenolpyruvate pocket; it reads KN. Position 95 (Arg-95) interacts with UDP-N-acetyl-alpha-D-glucosamine. The active-site Proton donor is Cys-119. Cys-119 is subject to 2-(S-cysteinyl)pyruvic acid O-phosphothioketal. Residues Asp-306 and Ile-328 each contribute to the UDP-N-acetyl-alpha-D-glucosamine site.

It belongs to the EPSP synthase family. MurA subfamily.

The protein resides in the cytoplasm. The enzyme catalyses phosphoenolpyruvate + UDP-N-acetyl-alpha-D-glucosamine = UDP-N-acetyl-3-O-(1-carboxyvinyl)-alpha-D-glucosamine + phosphate. Its pathway is cell wall biogenesis; peptidoglycan biosynthesis. Cell wall formation. Adds enolpyruvyl to UDP-N-acetylglucosamine. The chain is UDP-N-acetylglucosamine 1-carboxyvinyltransferase 2 from Symbiobacterium thermophilum (strain DSM 24528 / JCM 14929 / IAM 14863 / T).